Consider the following 431-residue polypeptide: Histidine--tRNA ligase (431 aa).

This sequence belongs to the class-II aminoacyl-tRNA synthetase family. In terms of assembly, homodimer.

It localises to the cytoplasm. The catalysed reaction is tRNA(His) + L-histidine + ATP = L-histidyl-tRNA(His) + AMP + diphosphate + H(+). This Neisseria gonorrhoeae (strain ATCC 700825 / FA 1090) protein is Histidine--tRNA ligase.